The chain runs to 512 residues: Histidine ammonia-lyase (512 aa).

Residues 145 to 147 constitute a cross-link (5-imidazolinone (Ala-Gly)); that stretch reads ASG. Ser146 is subject to 2,3-didehydroalanine (Ser).

The protein belongs to the PAL/histidase family. Contains an active site 4-methylidene-imidazol-5-one (MIO), which is formed autocatalytically by cyclization and dehydration of residues Ala-Ser-Gly.

The protein localises to the cytoplasm. The enzyme catalyses L-histidine = trans-urocanate + NH4(+). It functions in the pathway amino-acid degradation; L-histidine degradation into L-glutamate; N-formimidoyl-L-glutamate from L-histidine: step 1/3. The sequence is that of Histidine ammonia-lyase from Pseudomonas fluorescens (strain SBW25).